Consider the following 225-residue polypeptide: Putative O-phosphotransferase MT2714 (225 aa).

G30 to T37 is an ATP binding site.

To S.violaceus chloramphenicol 3-O phosphotransferase.

The sequence is that of Putative O-phosphotransferase MT2714 from Mycobacterium tuberculosis (strain CDC 1551 / Oshkosh).